The primary structure comprises 486 residues: ATP synthase subunit beta (486 aa).

170-177 contacts ATP; that stretch reads GGAGVGKT.

It belongs to the ATPase alpha/beta chains family. F-type ATPases have 2 components, CF(1) - the catalytic core - and CF(0) - the membrane proton channel. CF(1) has five subunits: alpha(3), beta(3), gamma(1), delta(1), epsilon(1). CF(0) has three main subunits: a(1), b(2) and c(9-12). The alpha and beta chains form an alternating ring which encloses part of the gamma chain. CF(1) is attached to CF(0) by a central stalk formed by the gamma and epsilon chains, while a peripheral stalk is formed by the delta and b chains.

The protein localises to the cell membrane. It carries out the reaction ATP + H2O + 4 H(+)(in) = ADP + phosphate + 5 H(+)(out). Produces ATP from ADP in the presence of a proton gradient across the membrane. The catalytic sites are hosted primarily by the beta subunits. The protein is ATP synthase subunit beta of Clavibacter michiganensis subsp. michiganensis (strain NCPPB 382).